Consider the following 307-residue polypeptide: ATP synthase gamma chain (307 aa).

Belongs to the ATPase gamma chain family. As to quaternary structure, F-type ATPases have 2 components, CF(1) - the catalytic core - and CF(0) - the membrane proton channel. CF(1) has five subunits: alpha(3), beta(3), gamma(1), delta(1), epsilon(1). CF(0) has three main subunits: a, b and c.

Its subcellular location is the cell membrane. Its function is as follows. Produces ATP from ADP in the presence of a proton gradient across the membrane. The gamma chain is believed to be important in regulating ATPase activity and the flow of protons through the CF(0) complex. This is ATP synthase gamma chain from Bifidobacterium longum subsp. infantis (strain ATCC 15697 / DSM 20088 / JCM 1222 / NCTC 11817 / S12).